The primary structure comprises 250 residues: Indole-3-glycerol phosphate synthase (250 aa).

It belongs to the TrpC family.

It catalyses the reaction 1-(2-carboxyphenylamino)-1-deoxy-D-ribulose 5-phosphate + H(+) = (1S,2R)-1-C-(indol-3-yl)glycerol 3-phosphate + CO2 + H2O. It participates in amino-acid biosynthesis; L-tryptophan biosynthesis; L-tryptophan from chorismate: step 4/5. This is Indole-3-glycerol phosphate synthase from Bacillus pumilus (strain SAFR-032).